A 359-amino-acid chain; its full sequence is MTTTLQQRSGASSWQAFCEWVTSTNNRLYVGWFGVLMIPTLLAATICFVIAFVAAPPVDIDGIREPVAGSLIYGNNIISGAVVPSSNAIGLHFYPIWEAASLDEWLYNGGPFQLVVFHFLIGIYAYMGREWELSYRLGMRPWICVAYSAPVAAASAVFLVYPFGQGSFSDAMPLGISGTFNYMLVFQAEHNILMHPFHMLGVAGVFGGSLFSAMHGSLVTSSLVRETTESESQNYGYKFGQEEETYNIVAAHGYFGRLIFQYASFNNSRSLHFFLAAWPVVGIWFTALGVSTMAFNLNGFNFNQSILDGQGRVLNTWADVLNRAGLGMEVMHERNAHNFPLDLAAAESTPVALQAPAIG.

3 helical membrane passes run 29–46 (YVGWFGVLMIPTLLAATI), 118–133 (HFLIGIYAYMGREWEL), and 142–156 (WICVAYSAPVAAASA). His118 lines the chlorophyll a pocket. Residue Tyr126 coordinates pheophytin a. [CaMn4O5] cluster is bound by residues Asp170 and Glu189. Residues 197-218 (FHMLGVAGVFGGSLFSAMHGSL) form a helical membrane-spanning segment. His198 lines the chlorophyll a pocket. A quinone is bound by residues His215 and 264–265 (SF). Residue His215 participates in Fe cation binding. His272 serves as a coordination point for Fe cation. The chain crosses the membrane as a helical span at residues 274–288 (FLAAWPVVGIWFTAL). [CaMn4O5] cluster is bound by residues His332, Glu333, Asp342, and Ala344. The propeptide occupies 345-359 (AAESTPVALQAPAIG).

This sequence belongs to the reaction center PufL/M/PsbA/D family. PSII is composed of 1 copy each of membrane proteins PsbA, PsbB, PsbC, PsbD, PsbE, PsbF, PsbH, PsbI, PsbJ, PsbK, PsbL, PsbM, PsbT, PsbX, PsbY, PsbZ, Psb30/Ycf12, peripheral proteins PsbO, CyanoQ (PsbQ), PsbU, PsbV and a large number of cofactors. It forms dimeric complexes. The D1/D2 heterodimer binds P680, chlorophylls that are the primary electron donor of PSII, and subsequent electron acceptors. It shares a non-heme iron and each subunit binds pheophytin, quinone, additional chlorophylls, carotenoids and lipids. D1 provides most of the ligands for the Mn4-Ca-O5 cluster of the oxygen-evolving complex (OEC). There is also a Cl(-1) ion associated with D1 and D2, which is required for oxygen evolution. The PSII complex binds additional chlorophylls, carotenoids and specific lipids. is required as a cofactor. Post-translationally, tyr-161 forms a radical intermediate that is referred to as redox-active TyrZ, YZ or Y-Z. In terms of processing, C-terminally processed by CtpA; processing is essential to allow assembly of the oxygen-evolving complex and thus photosynthetic growth.

Its subcellular location is the cellular thylakoid membrane. It carries out the reaction 2 a plastoquinone + 4 hnu + 2 H2O = 2 a plastoquinol + O2. In terms of biological role, photosystem II (PSII) is a light-driven water:plastoquinone oxidoreductase that uses light energy to abstract electrons from H(2)O, generating O(2) and a proton gradient subsequently used for ATP formation. It consists of a core antenna complex that captures photons, and an electron transfer chain that converts photonic excitation into a charge separation. The D1/D2 (PsbA/PsbD) reaction center heterodimer binds P680, the primary electron donor of PSII as well as several subsequent electron acceptors. This is Photosystem II protein D1 1 from Synechococcus sp. (strain CC9605).